A 305-amino-acid polypeptide reads, in one-letter code: tRNA dimethylallyltransferase (305 aa).

13-20 (GPTSSGKT) lines the ATP pocket. 15–20 (TSSGKT) lines the substrate pocket. The segment at 39 to 42 (DSKQ) is interaction with substrate tRNA.

It belongs to the IPP transferase family. In terms of assembly, monomer. The cofactor is Mg(2+).

It carries out the reaction adenosine(37) in tRNA + dimethylallyl diphosphate = N(6)-dimethylallyladenosine(37) in tRNA + diphosphate. Catalyzes the transfer of a dimethylallyl group onto the adenine at position 37 in tRNAs that read codons beginning with uridine, leading to the formation of N6-(dimethylallyl)adenosine (i(6)A). This is tRNA dimethylallyltransferase from Neorickettsia sennetsu (strain ATCC VR-367 / Miyayama) (Ehrlichia sennetsu).